Reading from the N-terminus, the 268-residue chain is TodF product hydratase (268 aa).

This sequence belongs to the hydratase/decarboxylase family.

It functions in the pathway xenobiotic degradation; toluene degradation. Functionally, converts the product of 2-hydroxy-6-oxo-2,4-heptadienoate hydrolase. The chain is TodF product hydratase (todJ) from Pseudomonas putida (strain ATCC 700007 / DSM 6899 / JCM 31910 / BCRC 17059 / LMG 24140 / F1).